We begin with the raw amino-acid sequence, 199 residues long: Protein Thf1 (199 aa).

Residues 167–198 (QYSRVEKDISMYKSNIEKMKQALEIIALNLKT) adopt a coiled-coil conformation.

Belongs to the THF1 family.

In terms of biological role, may be involved in photosynthetic membrane biogenesis. This Prochlorococcus marinus (strain NATL1A) protein is Protein Thf1.